A 123-amino-acid chain; its full sequence is Large ribosomal subunit protein uL14c (123 aa).

The protein belongs to the universal ribosomal protein uL14 family. In terms of assembly, part of the 50S ribosomal subunit. Interacts with IOJAP.

It localises to the plastid. It is found in the chloroplast. Binds to 23S rRNA. This Zea mays (Maize) protein is Large ribosomal subunit protein uL14c.